The following is a 214-amino-acid chain: Late embryogenesis abundant protein At1g64065 (214 aa).

Residues 41 to 61 (VYSLTIIVIIFALCLILSSIF) traverse the membrane as a helical segment.

It belongs to the LEA type 2 family.

It localises to the membrane. This is Late embryogenesis abundant protein At1g64065 from Arabidopsis thaliana (Mouse-ear cress).